The primary structure comprises 216 residues: Ribosomal RNA large subunit methyltransferase E (216 aa).

S-adenosyl-L-methionine is bound by residues G67, W69, D87, D103, and D128. K168 functions as the Proton acceptor in the catalytic mechanism.

Belongs to the class I-like SAM-binding methyltransferase superfamily. RNA methyltransferase RlmE family.

The protein localises to the cytoplasm. The enzyme catalyses uridine(2552) in 23S rRNA + S-adenosyl-L-methionine = 2'-O-methyluridine(2552) in 23S rRNA + S-adenosyl-L-homocysteine + H(+). In terms of biological role, specifically methylates the uridine in position 2552 of 23S rRNA at the 2'-O position of the ribose in the fully assembled 50S ribosomal subunit. The sequence is that of Ribosomal RNA large subunit methyltransferase E from Acinetobacter baumannii (strain AB307-0294).